The sequence spans 303 residues: Pycsar effector protein BcPycTIR (303 aa).

A nucleoside 3',5'-cyclic phosphate is bound at residue 22 to 138; the sequence is KLVGGDKGLA…RRMAKELSKR (117 aa). The interval 154 to 273 is TIR-like; the sequence is RVFVISSAEA…DMAGVTTIPY (120 aa).

Purified protein forms large 2-dimensional sheets when incubated with cUMP and shorter filaments in the presence of cCMP.

Its subcellular location is the cytoplasm. It carries out the reaction NAD(+) + H2O = ADP-D-ribose + nicotinamide + H(+). Its activity is regulated as follows. Activated by cyclic UMP (cUMP) and to a lesser extent by cCMP. In terms of biological role, pycsar (pyrimidine cyclase system for antiphage resistance) provides immunity against bacteriophage. The pyrimidine cyclase (PycC) synthesizes cyclic nucleotides in response to infection; these serve as specific second messenger signals. The signals activate the adjacent effector, leading to bacterial cell death and abortive phage infection. A clade B Pycsar system. Functionally, the effector protein of a two-gene Pycsar system. Upon activation by cyclic UMP (cUMP) degrades cellular NAD(+). Expression of this and adjacent uridylate cyclase BcPycC (AC A0A0J5ZXG5) probably confers resistance to bacteriophage. The genes are probably only expressed in response to bacteriophage infection. This protein probably only responds to cUMP (produced by its cognate NTP cyclase). In Burkholderia cepacia (Pseudomonas cepacia), this protein is Pycsar effector protein BcPycTIR.